The following is a 124-amino-acid chain: Small ribosomal subunit protein uS12 (124 aa).

At aspartate 89 the chain carries 3-methylthioaspartic acid.

This sequence belongs to the universal ribosomal protein uS12 family. Part of the 30S ribosomal subunit. Contacts proteins S8 and S17. May interact with IF1 in the 30S initiation complex.

Functionally, with S4 and S5 plays an important role in translational accuracy. Its function is as follows. Interacts with and stabilizes bases of the 16S rRNA that are involved in tRNA selection in the A site and with the mRNA backbone. Located at the interface of the 30S and 50S subunits, it traverses the body of the 30S subunit contacting proteins on the other side and probably holding the rRNA structure together. The combined cluster of proteins S8, S12 and S17 appears to hold together the shoulder and platform of the 30S subunit. This is Small ribosomal subunit protein uS12 from Shewanella denitrificans (strain OS217 / ATCC BAA-1090 / DSM 15013).